The primary structure comprises 212 residues: N-(5'-phosphoribosyl)anthranilate isomerase (212 aa).

This sequence belongs to the TrpF family.

It carries out the reaction N-(5-phospho-beta-D-ribosyl)anthranilate = 1-(2-carboxyphenylamino)-1-deoxy-D-ribulose 5-phosphate. It participates in amino-acid biosynthesis; L-tryptophan biosynthesis; L-tryptophan from chorismate: step 3/5. This is N-(5'-phosphoribosyl)anthranilate isomerase from Myxococcus xanthus (strain DK1622).